The following is a 989-amino-acid chain: Presequence protease, mitochondrial (989 aa).

A mitochondrion-targeting transit peptide spans 1-16 (MLRFQRFASSYAQAQA). Zn(2+) is bound at residue His84. Glu87 functions as the Proton acceptor in the catalytic mechanism. His88 provides a ligand contact to Zn(2+). Glu160 is an active-site residue. A Zn(2+)-binding site is contributed by Glu185. At Ser920 the chain carries Phosphoserine. 972–979 (GPGIEGKT) contributes to the ATP binding site.

The protein belongs to the peptidase M16 family. PreP subfamily. As to quaternary structure, monomer and homodimer; homodimerization is induced by binding of the substrate. Zn(2+) is required as a cofactor.

Its subcellular location is the mitochondrion intermembrane space. The protein resides in the mitochondrion matrix. With respect to regulation, activated by nucleotides, including ATP, GTP, CTP, UTP, and ADP. Activated by copper, manganese, calcium and magnesium ions; copper and manganese restore activity following inactivation by EDTA (ethylenediaminetetraacetic acid). Inhibited by metal chelators including EDTA, EGTA (ethylene glycol bis(2-aminoethyl)tetraacetic acid), and 1,10-phenanthroline. Inhibited by copper, zinc, and iron ions. Also inhibited by dithiothreitol p-mercuribenzenesulfonic acid, N-ethylmaleimide, protoporphyrin, hemin, protamine and triarginine. Degrades mitochondrial transit peptides after their cleavage in the intermembrane space or in the matrix, and presequence peptides; clearance of these peptides is required to keep the presequence processing machinery running. Preferentially cleaves the N-terminal side of paired basic amino acid residues. Also degrades other unstructured peptides. May function as an ATP-dependent peptidase as opposed to a metalloendopeptidase. The sequence is that of Presequence protease, mitochondrial from Saccharomyces cerevisiae (strain ATCC 204508 / S288c) (Baker's yeast).